We begin with the raw amino-acid sequence, 194 residues long: Amidophosphoribosyltransferase (194 aa).

The propeptide occupies 1-11 (MPHEPKGLNEE). Cys-12 (nucleophile) is an active-site residue. Residues 12–194 (CGVFGVWGNP…PHGFRPMVVG (183 aa)) form the Glutamine amidotransferase type-2 domain.

In the C-terminal section; belongs to the purine/pyrimidine phosphoribosyltransferase family.

The catalysed reaction is 5-phospho-beta-D-ribosylamine + L-glutamate + diphosphate = 5-phospho-alpha-D-ribose 1-diphosphate + L-glutamine + H2O. Its pathway is purine metabolism; IMP biosynthesis via de novo pathway; N(1)-(5-phospho-D-ribosyl)glycinamide from 5-phospho-alpha-D-ribose 1-diphosphate: step 1/2. Its function is as follows. Catalyzes the formation of phosphoribosylamine from phosphoribosylpyrophosphate (PRPP) and glutamine. In Lacticaseibacillus casei (Lactobacillus casei), this protein is Amidophosphoribosyltransferase.